The chain runs to 52 residues: Rubredoxin (52 aa).

Methionine 1 is subject to N-formylmethionine; partial. One can recognise a Rubredoxin-like domain in the interval 1 to 52 (MKKYGCLVCGYVYDPAKGDPDHGIAPGTAFEDLPADWVCPLCGVSKDEFEPL). 4 residues coordinate Fe cation: cysteine 6, cysteine 9, cysteine 39, and cysteine 42.

Belongs to the rubredoxin family. The cofactor is Fe(3+). Observed in four forms, with and without iron, and with and without formylation at Met-1.

Rubredoxin is a small nonheme, iron protein lacking acid-labile sulfide. Its single Fe, chelated to 4 Cys, functions as an electron acceptor and may also stabilize the conformation of the molecule. The chain is Rubredoxin from Heliobacterium mobile (Heliobacillus mobilis).